The chain runs to 1305 residues: MASPVNQQLLHHTEVRCDGSGDGSSVTVRINRQHHQAPSRRCKYSISSSCSSGESGVKKTGGSGGARRQKKLPQLFERSTSNWWNPKFDSNNLEEACVERCFPQTQRRFRYALMYLSVAGLLWSIYFSVHMKTKLVSHLVPTLCFLIVCLGFFFFTFTKSYARHCTAISLLVTLLVFTLTLASQFQVLNPGLGSDSLSNLTSFSATGSSSCLSQVGSFSICVEVLLLLYTVMHLPLYLSACLGVAYSILFETFGYHFRDESCFVLLVGRMAHWELLSKALLHVCIHAIGVHLFIMSEVRSRSTFLKVGQSIMHGKDLEVEKALKERMIHSVMPRIIADDLMKQGDDESENSVKRHSASSPKSRKKKSSIQKTPIIFRPFKMQRIEQVSILFADIVGFTKMSANKSAHALVGLLNDLFGRFDRLCEETKCEKISTLGDCYYCVAGCPEPRPDHAYCCIEMGLGMIEAIDQFCQEKKEMVNMRVGVHTGTVLCGILGMRRFKFDVWSNDVNLANLMEQLGVAGKVHISEKTARYLDDRYLMEDSMVVERLGQIVAADQLKGLKTFLISGGRTRVPSCSCSQTLIPVQEGTDLSSPSLAPHVQAAISETSDSHTNCTQPETLKSCPSCGETAARDGPEEGVSAANGGGEEWKGGAPRPSAIGASLKDPERSPESSTGDTLTNSQASLYDMLQEKGRWCGVSMDQSALLPLRFKNIREKTDAHFVEVIKEDSLMKDYFFKPPINPLSLNFLDKELETSYRASYQEEVIRMAPVKTFASATFSSLQDVLLNYFIFVLLSVACLLKPGTNTVSPPTLALVLLSVCGLLGFLSLLVSVRMAFYLEDMLLCTRRLLEIISGWVPRHFIGTVLVCLPAAVIFSYLSSDFYTDIHYTMFLCSALLIPMVQYCNFCQLSSSALLLATITGATMLILIYLPLCPQRPPLDPGTDIEANLSTSNSSYETLDNPRTELPFTRLGQEIAVAYFLLLLLVWFLNREFDVSYRLHYHGDVEADLHRTKIQSMRDQADWLLRNIIPYHVAEQLKVSQSYSKNHDDAGVIFASIVNFSEFYEENYEGGKECYRALNELIGDFDELLSKPHYSCIEKIKTIGATYMAASGLNPSQCQDSSQPHRHLQTLFEFAKEMMSVVDEFNNNMLWFNFKLRIGFNHGPLTAGVIGTTKLLYDIWGDTVNIASRMDTTGVECRIQASEESYRVLVKMGYDFDYRGTVNVKGKGQMKTYHFPKCTDNGGLVPHHQLCISPDIRVQVDGSIGRSPTDEISSLVTGGKGAVELGSGEAERKREKAEERGRDGGAR.

The Cytoplasmic portion of the chain corresponds to 1–110 (MASPVNQQLL…CFPQTQRRFR (110 aa)). The span at 46–55 (ISSSCSSGES) shows a compositional bias: low complexity. A disordered region spans residues 46 to 71 (ISSSCSSGESGVKKTGGSGGARRQKK). Residues 111–131 (YALMYLSVAGLLWSIYFSVHM) traverse the membrane as a helical segment. Over 132–134 (KTK) the chain is Extracellular. Residues 135–155 (LVSHLVPTLCFLIVCLGFFFF) form a helical membrane-spanning segment. Residues 156–164 (TFTKSYARH) lie on the Cytoplasmic side of the membrane. Residues 165–185 (CTAISLLVTLLVFTLTLASQF) form a helical membrane-spanning segment. Over 186–209 (QVLNPGLGSDSLSNLTSFSATGSS) the chain is Extracellular. The N-linked (GlcNAc...) asparagine glycan is linked to N199. A helical transmembrane segment spans residues 210–229 (SCLSQVGSFSICVEVLLLLY). Residues 230–235 (TVMHLP) lie on the Cytoplasmic side of the membrane. Residues 236 to 253 (LYLSACLGVAYSILFETF) form a helical membrane-spanning segment. The Extracellular segment spans residues 254-274 (GYHFRDESCFVLLVGRMAHWE). Residues 275-295 (LLSKALLHVCIHAIGVHLFIM) traverse the membrane as a helical segment. The Cytoplasmic portion of the chain corresponds to 296 to 778 (SEVRSRSTFL…VKTFASATFS (483 aa)). The interval 343–369 (QGDDESENSVKRHSASSPKSRKKKSSI) is disordered. The segment covering 353–368 (KRHSASSPKSRKKKSS) has biased composition (basic residues). D393, I394, and D437 together coordinate Mg(2+). Residues 393-398 (DIVGFT), 435-437 (LGD), and R481 contribute to the ATP site. 2 stretches are compositionally biased toward polar residues: residues 607–618 (SDSHTNCTQPET) and 670–680 (ESSTGDTLTNS). The interval 607–680 (SDSHTNCTQP…SSTGDTLTNS (74 aa)) is disordered. A helical transmembrane segment spans residues 779–799 (SLQDVLLNYFIFVLLSVACLL). The Extracellular segment spans residues 800 to 810 (KPGTNTVSPPT). Residues 811-831 (LALVLLSVCGLLGFLSLLVSV) form a helical membrane-spanning segment. Residues 832–859 (RMAFYLEDMLLCTRRLLEIISGWVPRHF) are Cytoplasmic-facing. A helical membrane pass occupies residues 860-880 (IGTVLVCLPAAVIFSYLSSDF). At 881–883 (YTD) the chain is on the extracellular side. A helical membrane pass occupies residues 884–904 (IHYTMFLCSALLIPMVQYCNF). At 905-911 (CQLSSSA) the chain is on the cytoplasmic side. Residues 912–932 (LLLATITGATMLILIYLPLCP) traverse the membrane as a helical segment. Topologically, residues 933 to 966 (QRPPLDPGTDIEANLSTSNSSYETLDNPRTELPF) are extracellular. N-linked (GlcNAc...) asparagine glycosylation is found at N946 and N951. The chain crosses the membrane as a helical span at residues 967-987 (TRLGQEIAVAYFLLLLLVWFL). Residues 988-1305 (NREFDVSYRL…EERGRDGGAR (318 aa)) lie on the Cytoplasmic side of the membrane. Residues K1099, 1176 to 1178 (DIW), 1183 to 1187 (NIASR), and K1223 contribute to the ATP site. A disordered region spans residues 1261-1305 (SIGRSPTDEISSLVTGGKGAVELGSGEAERKREKAEERGRDGGAR). Positions 1287-1305 (EAERKREKAEERGRDGGAR) are enriched in basic and acidic residues.

Belongs to the adenylyl cyclase class-4/guanylyl cyclase family. Mg(2+) is required as a cofactor. It depends on Mn(2+) as a cofactor. Detected in oocytes.

It is found in the cell membrane. It carries out the reaction ATP = 3',5'-cyclic AMP + diphosphate. Adenylyl cyclase that catalyzes the formation of the signaling molecule cAMP in response to activation of G protein-coupled receptors. The sequence is that of Adenylate cyclase type 9 (adcy9) from Xenopus laevis (African clawed frog).